We begin with the raw amino-acid sequence, 204 residues long: FMN-dependent NADH:quinone oxidoreductase 5 (204 aa).

FMN is bound at residue Ser10.

It belongs to the azoreductase type 1 family. Homodimer. FMN serves as cofactor.

The enzyme catalyses 2 a quinone + NADH + H(+) = 2 a 1,4-benzosemiquinone + NAD(+). It carries out the reaction N,N-dimethyl-1,4-phenylenediamine + anthranilate + 2 NAD(+) = 2-(4-dimethylaminophenyl)diazenylbenzoate + 2 NADH + 2 H(+). Its function is as follows. Quinone reductase that provides resistance to thiol-specific stress caused by electrophilic quinones. In terms of biological role, also exhibits azoreductase activity. Catalyzes the reductive cleavage of the azo bond in aromatic azo compounds to the corresponding amines. The chain is FMN-dependent NADH:quinone oxidoreductase 5 from Burkholderia lata (strain ATCC 17760 / DSM 23089 / LMG 22485 / NCIMB 9086 / R18194 / 383).